Consider the following 512-residue polypeptide: Cytochrome P450 monooxygenase FrzL (512 aa).

A helical transmembrane segment spans residues 6–26; sequence TMLAFVPYLAVFVACYGLVYY. C423 is a binding site for heme.

It belongs to the cytochrome P450 family. It depends on heme as a cofactor.

It is found in the membrane. Functionally, cytochrome P450 monooxygenase; part of the gene cluster that mediates the biosynthesis of the alkaloid (-)-FR901483, a potent immunosuppressant that shows efficacy in animal models and a probable inhibitor of purine nucleotide biosynthesis by targeting phosphoribosylpyrophosphate amidotransferase (PPAT). The only unassigned enzyme in the cluster is the second cytochrome P450 monooxygenase FrzL. The biosynthesis of (-)-FR901483 starts with the condensation of two L-tyrosines to yield (S,S)-dityrosyl-piperazine. This process occurs in 3 steps with the non-canonical nonribosomal peptide synthetase FrzA catalyzing the reduction of L-tyrosine into L-tyrosinal, the spontaneous condensation of 2 L-tyrosinal units, and the subsequent reduction by the NmrA-like family domain-containing oxidoreductase FrzB. The cytochrome P450 monooxygenase FrzC then performs coupling between N10 and C1' to morph the piperazine into a 1,4-diazabicyclo[3.2.1]octane spiro-fused to a 2,5-cyclohexadienone. The dienone portion is further reduced to cyclohexanone by the flavin-dependent reductase FrzD. The methyltranserases (MTs) FrzE and FrzF are then involved in the methylation at the C10' amine and the C4 phenolic oxygen, respectively. The order of the two MTs appear to be interchangeable. Cleavage of the C9-N10' bond by the dioxygenase FrzG then leads to formation of a conjugated iminium. In addition to the oxidation of C9, an additional dehydrogenation between C7 and C8 can occur to give a likely shunt product. The next biosynthetic step is the intramolecular aldol condensation catalyzed by the newly identified aldolase FrzH to yield an aza-tricyclic product with the formation of a C9-C3' bond. The short-chain dehydrogenase/reductase FrzI then produces dephospho-(-)-FR901483 that is phosphorylated at C4'-OH into (-)-FR901483 by the phosphotransferase FrzJ. This Cladobotryum sp protein is Cytochrome P450 monooxygenase FrzL.